Consider the following 633-residue polypeptide: Probable methyltransferase PMT15 (633 aa).

At 1–24 the chain is on the cytoplasmic side; that stretch reads MGNYRWPSKLSKLSLRAKQTNLYR. Residues 25-45 traverse the membrane as a helical; Signal-anchor for type II membrane protein segment; sequence VILIAILCVTFYFVGVWQHSG. At 46–633 the chain is on the lumenal side; it reads RGISRSSISN…APAPDQSSDP (588 aa). Residues Asn113 and Asn298 are each glycosylated (N-linked (GlcNAc...) asparagine).

The protein belongs to the methyltransferase superfamily.

The protein resides in the golgi apparatus membrane. The polypeptide is Probable methyltransferase PMT15 (Arabidopsis thaliana (Mouse-ear cress)).